The following is a 1528-amino-acid chain: DNA topoisomerase 2-alpha (1528 aa).

Residue Met1 is modified to N-acetylmethionine. At Ser4 the chain carries Phosphoserine. Lys17 participates in a covalent cross-link: Glycyl lysine isopeptide (Lys-Gly) (interchain with G-Cter in SUMO2). ATP is bound by residues Asn90, Asn119, and 147-149 (SSN). Glycyl lysine isopeptide (Lys-Gly) (interchain with G-Cter in SUMO2) cross-links involve residues Lys155 and Lys156. 160-167 (GRNGYGAK) contributes to the ATP binding site. Phosphothreonine is present on Thr281. The interaction with DNA stretch occupies residues 341-343 (KKK). A Glycyl lysine isopeptide (Lys-Gly) (interchain with G-Cter in SUMO2) cross-link involves residue Lys351. 375–377 (QTK) contacts ATP. Glycyl lysine isopeptide (Lys-Gly) (interchain with G-Cter in SUMO2) cross-links involve residues Lys385, Lys396, Lys415, Lys417, Lys424, and Lys439. One can recognise a Toprim domain in the interval 454–571 (CTLILTEGDS…SLLRHRFLEE (118 aa)). A Mg(2+)-binding site is contributed by Glu460. Residues Lys465, Lys479, and Lys528 each participate in a glycyl lysine isopeptide (Lys-Gly) (interchain with G-Cter in SUMO2) cross-link. 2 residues coordinate Mg(2+): Asp540 and Asp542. Residues Lys583, Lys598, Lys613, Lys621, Lys624, Lys631, Lys638, Lys654, Lys661, and Lys675 each participate in a glycyl lysine isopeptide (Lys-Gly) (interchain with G-Cter in SUMO2) cross-link. Residues 714-1168 (IPSMVDGLKP…SPSDLWKEDL (455 aa)) enclose the Topo IIA-type catalytic domain. Tyr804 functions as the O-(5'-phospho-DNA)-tyrosine intermediate in the catalytic mechanism. The tract at residues 989-998 (KLQSSLTCNS) is interaction with DNA. Lys1074 is covalently cross-linked (Glycyl lysine isopeptide (Lys-Gly) (interchain with G-Cter in SUMO2)). Disordered stretches follow at residues 1090–1118 (KEAQQKVPDEEENEESDTETSTSDSAAEA) and 1183–1211 (KQDEQVGLPGKAGKAKGKKAQMCADVLPS). The segment covering 1098–1107 (DEEENEESDT) has biased composition (acidic residues). At Ser1105 the chain carries Phosphoserine; by CK1. Over residues 1108–1118 (ETSTSDSAAEA) the composition is skewed to low complexity. Residues Lys1193 and Lys1201 each participate in a glycyl lysine isopeptide (Lys-Gly) (interchain with G-Cter in SUMO2) cross-link. Ser1211 is subject to Phosphoserine. Residue Lys1226 forms a Glycyl lysine isopeptide (Lys-Gly) (interchain with G-Cter in SUMO2) linkage. The disordered stretch occupies residues 1229-1528 (AEKKIRKKIK…EESDDDDDLF (300 aa)). Lys1238 participates in a covalent cross-link: Glycyl lysine isopeptide (Lys-Gly) (interchain with G-Cter in SUMO1); alternate. Residue Lys1238 forms a Glycyl lysine isopeptide (Lys-Gly) (interchain with G-Cter in SUMO2); alternate linkage. Thr1245 is subject to Phosphothreonine. A compositionally biased stretch (basic and acidic residues) spans 1258-1270 (QRIEKKQKKEPGA). Residues Lys1272, Lys1279, and Lys1282 each participate in a glycyl lysine isopeptide (Lys-Gly) (interchain with G-Cter in SUMO2) cross-link. A phosphoserine mark is found at Ser1291, Ser1293, Ser1295, and Ser1298. Residues 1296–1306 (DVSSNESNVDV) show a composition bias toward low complexity. Thr1323 is subject to Phosphothreonine. Residues 1326-1345 (LDSDEDFSGLDEKDEDEDFL) show a composition bias toward acidic residues. Phosphoserine occurs at positions 1328 and 1333. The residue at position 1350 (Thr1350) is a Phosphothreonine. Glycyl lysine isopeptide (Lys-Gly) (interchain with G-Cter in SUMO2) cross-links involve residues Lys1359 and Lys1363. Phosphoserine occurs at positions 1370 and 1373. Lys1382 participates in a covalent cross-link: Glycyl lysine isopeptide (Lys-Gly) (interchain with G-Cter in SUMO2). 2 positions are modified to phosphoserine: Ser1384 and Ser1388. A Glycyl lysine isopeptide (Lys-Gly) (interchain with G-Cter in SUMO2); alternate cross-link involves residue Lys1418. Lys1418 is modified (N6-acetyllysine; alternate). An interaction with PLSCR1 region spans residues 1429-1435 (KKRAAPK). Residue Lys1438 forms a Glycyl lysine isopeptide (Lys-Gly) (interchain with G-Cter in SUMO2); alternate linkage. At Lys1438 the chain carries N6-acetyllysine; alternate. Residues Lys1450 and Lys1455 each participate in a glycyl lysine isopeptide (Lys-Gly) (interchain with G-Cter in SUMO2) cross-link. A phosphoserine mark is found at Ser1465, Ser1467, Ser1470, and Ser1472. Residues Lys1480 and Lys1488 each participate in a glycyl lysine isopeptide (Lys-Gly) (interchain with G-Cter in SUMO2) cross-link. Basic and acidic residues predominate over residues 1506–1519 (AKSDRARKPIKYLE). Ser1521 is modified (phosphoserine).

It belongs to the type II topoisomerase family. Homodimer. Interacts with COPS5. Interacts with RECQL5; this stimulates DNA decatenation. Interacts with SETMAR; stimulates the topoisomerase activity. Interacts with DHX9; this interaction occurs in a E2 enzyme UBE2I- and RNA-dependent manner, negatively regulates DHX9-mediated double-stranded DNA and RNA duplex helicase activity and stimulates TOP2A-mediated supercoiled DNA relaxation activity. Interacts with HNRNPU (via C-terminus); this interaction protects the topoisomerase TOP2A from degradation and positively regulates the relaxation of supercoiled DNA in a RNA-dependent manner. Interacts with MCM3AP. Interacts with ERCC6. Interacts with PLSCR1. Interacts with GCNA; this interaction allows the resolution of topoisomerase II (TOP2A) DNA-protein cross-links. Interacts with POL1RA/RPA1 (via dock II) and UBTF in the context of Pol I complex; may assist Pol I transcription initiation by releasing supercoils occurring during DNA unwinding. Interacts with TPRN; TPRN interacts with a number of DNA damage response proteins, is recruited to sites of DNA damage and may play a role in DNA damage repair. The cofactor is Mg(2+). It depends on Mn(2+) as a cofactor. Requires Ca(2+) as cofactor. Post-translationally, phosphorylation has no effect on catalytic activity. However, phosphorylation at Ser-1105 by CSNK1D/CK1 promotes DNA cleavable complex formation.

The protein resides in the cytoplasm. It is found in the nucleus. The protein localises to the nucleoplasm. It localises to the nucleolus. The catalysed reaction is ATP-dependent breakage, passage and rejoining of double-stranded DNA.. Functionally, key decatenating enzyme that alters DNA topology by binding to two double-stranded DNA molecules, generating a double-stranded break in one of the strands, passing the intact strand through the broken strand, and religating the broken strand. May play a role in regulating the period length of BMAL1 transcriptional oscillation. In Mus musculus (Mouse), this protein is DNA topoisomerase 2-alpha (Top2a).